Consider the following 619-residue polypeptide: Probable pectinesterase/pectinesterase inhibitor 25 (619 aa).

The signal sequence occupies residues 1 to 23 (MKMQTLNFTSSLLFLSFIFLSCA). Residues 31–84 (SPSQPHSEPPSQLPFEPPVESPFFPPSQPPIFVPPSQPPSLPPSQSQSPSLACK) form a disordered region. The span at 37-72 (SEPPSQLPFEPPVESPFFPPSQPPIFVPPSQPPSLP) shows a compositional bias: pro residues. Residues 73–231 (PSQSQSPSLA…TRLYSISLGL (159 aa)) are pectinesterase inhibitor 25. N-linked (GlcNAc...) asparagine glycosylation is found at Asn220, Asn255, Asn312, Asn325, and Asn364. Positions 302–601 (AVIVGPFKSD…FTVYNFTMGD (300 aa)) are pectinesterase 25. Thr380 lines the substrate pocket. Residue Asn382 is glycosylated (N-linked (GlcNAc...) asparagine). Gln410 lines the substrate pocket. Catalysis depends on Asp433, which acts as the Proton donor; for pectinesterase activity. Cys447 and Cys467 are disulfide-bonded. The active-site Nucleophile; for pectinesterase activity is Asp454. Asn500 carries N-linked (GlcNAc...) asparagine glycosylation. Substrate contacts are provided by Arg522 and Trp524. N-linked (GlcNAc...) asparagine glycosylation is found at Asn550, Asn591, and Asn596.

It in the N-terminal section; belongs to the PMEI family. This sequence in the C-terminal section; belongs to the pectinesterase family. In terms of tissue distribution, expressed in siliques.

The protein resides in the secreted. Its subcellular location is the cell wall. The enzyme catalyses [(1-&gt;4)-alpha-D-galacturonosyl methyl ester](n) + n H2O = [(1-&gt;4)-alpha-D-galacturonosyl](n) + n methanol + n H(+). It functions in the pathway glycan metabolism; pectin degradation; 2-dehydro-3-deoxy-D-gluconate from pectin: step 1/5. In terms of biological role, acts in the modification of cell walls via demethylesterification of cell wall pectin. This is Probable pectinesterase/pectinesterase inhibitor 25 (PME25) from Arabidopsis thaliana (Mouse-ear cress).